The chain runs to 181 residues: Reverse rubrerythrin-1 (181 aa).

The region spanning 1–35 (MKKFKCVVCGYIYTGEDAPEKCPVCGAGKDKFVEV) is the Rubredoxin-like domain. Positions 6, 9, 22, 25, 69, 102, 132, 165, and 168 each coordinate Fe cation. In terms of domain architecture, Ferritin-like diiron spans 52–181 (KGVDKEVLEG…FRGLLNRYFK (130 aa)).

Homodimer. Requires Fe(3+) as cofactor.

The enzyme catalyses H2O2 + NADH + H(+) = NAD(+) + 2 H2O. Functions as the terminal component of an NADH peroxidase (NADH:H(2)O(2) oxidoreductase) when using NADH:rubredoxin oxidoreductase (NROR) and rubredoxin (Rd) as electron transport intermediaries from NADH to revRbr 1. Plays an important role in the oxidative stress defense system in C.acetobutylicum, an obligate anaerobic bacterium. Also exhibits NADH oxidase (NADH:O(2) oxidoreductase) activity in vitro, which is 100-fold lesser than that of FprA1/2 using the same electron transfer components. Therefore, its predominant function is most likely as a scavenger of its preferred substrate, H(2)O(2). In Clostridium acetobutylicum (strain ATCC 824 / DSM 792 / JCM 1419 / IAM 19013 / LMG 5710 / NBRC 13948 / NRRL B-527 / VKM B-1787 / 2291 / W), this protein is Reverse rubrerythrin-1 (rbr3A).